The sequence spans 138 residues: MMTKTQINKLIKMMNDLDYPFEAPLKESFIESIIQIEFNSNSTNCLEKLCNEVSILFKNQPDYLTFLRAMDGFEVNGLRLFSLSIPEPSVKNLFAVNEFYRNNDDFINPDLQERLVIGDYSISIFTYDIKGDAANLLI.

This is an uncharacterized protein from Escherichia coli (strain K12).